A 495-amino-acid chain; its full sequence is 3-octaprenyl-4-hydroxybenzoate carboxy-lyase (495 aa).

Asn-172 provides a ligand contact to Mn(2+). Residues 175 to 177, 189 to 191, and 194 to 195 contribute to the prenylated FMN site; these read IYR, RWL, and RG. Position 238 (Glu-238) interacts with Mn(2+). Residue Asp-287 is the Proton donor of the active site.

Belongs to the UbiD family. In terms of assembly, homohexamer. Requires prenylated FMN as cofactor. The cofactor is Mn(2+).

Its subcellular location is the cell membrane. The enzyme catalyses a 4-hydroxy-3-(all-trans-polyprenyl)benzoate + H(+) = a 2-(all-trans-polyprenyl)phenol + CO2. It functions in the pathway cofactor biosynthesis; ubiquinone biosynthesis. Its function is as follows. Catalyzes the decarboxylation of 3-octaprenyl-4-hydroxy benzoate to 2-octaprenylphenol, an intermediate step in ubiquinone biosynthesis. The chain is 3-octaprenyl-4-hydroxybenzoate carboxy-lyase from Marinobacter nauticus (strain ATCC 700491 / DSM 11845 / VT8) (Marinobacter aquaeolei).